Reading from the N-terminus, the 263-residue chain is Pyridoxine 5'-phosphate synthase (263 aa).

3-amino-2-oxopropyl phosphate is bound at residue N15. Position 17–18 (17–18 (DH)) interacts with 1-deoxy-D-xylulose 5-phosphate. R26 is a 3-amino-2-oxopropyl phosphate binding site. Catalysis depends on H51, which acts as the Proton acceptor. Positions 53 and 58 each coordinate 1-deoxy-D-xylulose 5-phosphate. Residue E78 is the Proton acceptor of the active site. Residue T108 participates in 1-deoxy-D-xylulose 5-phosphate binding. H199 acts as the Proton donor in catalysis. 3-amino-2-oxopropyl phosphate-binding positions include G200 and 221 to 222 (GH).

It belongs to the PNP synthase family. In terms of assembly, homooctamer; tetramer of dimers.

The protein localises to the cytoplasm. It carries out the reaction 3-amino-2-oxopropyl phosphate + 1-deoxy-D-xylulose 5-phosphate = pyridoxine 5'-phosphate + phosphate + 2 H2O + H(+). The protein operates within cofactor biosynthesis; pyridoxine 5'-phosphate biosynthesis; pyridoxine 5'-phosphate from D-erythrose 4-phosphate: step 5/5. Functionally, catalyzes the complicated ring closure reaction between the two acyclic compounds 1-deoxy-D-xylulose-5-phosphate (DXP) and 3-amino-2-oxopropyl phosphate (1-amino-acetone-3-phosphate or AAP) to form pyridoxine 5'-phosphate (PNP) and inorganic phosphate. This chain is Pyridoxine 5'-phosphate synthase, found in Ralstonia nicotianae (strain ATCC BAA-1114 / GMI1000) (Ralstonia solanacearum).